The primary structure comprises 439 residues: Exodeoxyribonuclease 7 large subunit (439 aa).

This sequence belongs to the XseA family. In terms of assembly, heterooligomer composed of large and small subunits.

The protein resides in the cytoplasm. It catalyses the reaction Exonucleolytic cleavage in either 5'- to 3'- or 3'- to 5'-direction to yield nucleoside 5'-phosphates.. Bidirectionally degrades single-stranded DNA into large acid-insoluble oligonucleotides, which are then degraded further into small acid-soluble oligonucleotides. This Haemophilus influenzae (strain ATCC 51907 / DSM 11121 / KW20 / Rd) protein is Exodeoxyribonuclease 7 large subunit.